The chain runs to 353 residues: MIEIDGSFGEGGGQILRTSVALSAVTLKPVRIFNIRAKRKNPGLRRQHMVAVKALAEMTDAEVRGLELGSTEIVFIPKTLKAGTFRFDIGTAGSVSLVLQAVTPAALFAPGEVRVQLRGGTDVPMSPPVDYLRFVFYPLLERFGAKTELVLKRRGHYPKGGGEVEFASRPVDSLTQWGEVERGEVLKVRGLSHCVKLPKHVAERQAKAAEEVLKKSGLKNVDIDLEWYPPERDPHLGPGSGIVLWAITERSLLGADSLGARGKRAERVGEEAARKLLEDLSTGKALDRHMSDMIVPYVSLACGRTEVGGAALTMHAWTHVHVVKKFLPELEVEISGELNKPFVMRVKGVCWQR.

Residues Gln100 and 289–292 contribute to the ATP site; that span reads HMSD. The Tele-AMP-histidine intermediate role is filled by His315.

It belongs to the RNA 3'-terminal cyclase family. Type 1 subfamily.

Its subcellular location is the cytoplasm. It catalyses the reaction a 3'-end 3'-phospho-ribonucleotide-RNA + ATP = a 3'-end 2',3'-cyclophospho-ribonucleotide-RNA + AMP + diphosphate. Catalyzes the conversion of 3'-phosphate to a 2',3'-cyclic phosphodiester at the end of RNA. The mechanism of action of the enzyme occurs in 3 steps: (A) adenylation of the enzyme by ATP; (B) transfer of adenylate to an RNA-N3'P to produce RNA-N3'PP5'A; (C) and attack of the adjacent 2'-hydroxyl on the 3'-phosphorus in the diester linkage to produce the cyclic end product. The biological role of this enzyme is unknown but it is likely to function in some aspects of cellular RNA processing. This Ignicoccus hospitalis (strain KIN4/I / DSM 18386 / JCM 14125) protein is RNA 3'-terminal phosphate cyclase.